The following is a 244-amino-acid chain: Aliphatic sulfonates import ATP-binding protein SsuB 2 (244 aa).

The ABC transporter domain occupies 13–229 (VQVRSLVRGF…ALGDSKFHEF (217 aa)). 45–52 (GKSGSGKS) serves as a coordination point for ATP.

This sequence belongs to the ABC transporter superfamily. Aliphatic sulfonates importer (TC 3.A.1.17.2) family. The complex is composed of two ATP-binding proteins (SsuB), two transmembrane proteins (SsuC) and a solute-binding protein (SsuA).

It is found in the cell membrane. The catalysed reaction is ATP + H2O + aliphatic sulfonate-[sulfonate-binding protein]Side 1 = ADP + phosphate + aliphatic sulfonateSide 2 + [sulfonate-binding protein]Side 1.. Its function is as follows. Part of the ABC transporter complex SsuABC involved in aliphatic sulfonates import. Responsible for energy coupling to the transport system. The polypeptide is Aliphatic sulfonates import ATP-binding protein SsuB 2 (Rhodococcus jostii (strain RHA1)).